The primary structure comprises 262 residues: Ribosomal RNA small subunit methyltransferase A (262 aa).

6 residues coordinate S-adenosyl-L-methionine: N14, L16, G41, E62, D87, and N109.

This sequence belongs to the class I-like SAM-binding methyltransferase superfamily. rRNA adenine N(6)-methyltransferase family. RsmA subfamily.

It localises to the cytoplasm. The enzyme catalyses adenosine(1518)/adenosine(1519) in 16S rRNA + 4 S-adenosyl-L-methionine = N(6)-dimethyladenosine(1518)/N(6)-dimethyladenosine(1519) in 16S rRNA + 4 S-adenosyl-L-homocysteine + 4 H(+). Its function is as follows. Specifically dimethylates two adjacent adenosines (A1518 and A1519) in the loop of a conserved hairpin near the 3'-end of 16S rRNA in the 30S particle. May play a critical role in biogenesis of 30S subunits. The polypeptide is Ribosomal RNA small subunit methyltransferase A (Francisella tularensis subsp. tularensis (strain FSC 198)).